The following is an 875-amino-acid chain: Protein translocase subunit SecA (875 aa).

Residues Q87, 105 to 109 (GEGKT), and D512 each bind ATP. Positions 860, 862, 871, and 872 each coordinate Zn(2+).

The protein belongs to the SecA family. As to quaternary structure, monomer and homodimer. Part of the essential Sec protein translocation apparatus which comprises SecA, SecYEG and auxiliary proteins SecDF-YajC and YidC. It depends on Zn(2+) as a cofactor.

The protein localises to the cell inner membrane. The protein resides in the cytoplasm. The enzyme catalyses ATP + H2O + cellular proteinSide 1 = ADP + phosphate + cellular proteinSide 2.. In terms of biological role, part of the Sec protein translocase complex. Interacts with the SecYEG preprotein conducting channel. Has a central role in coupling the hydrolysis of ATP to the transfer of proteins into and across the cell membrane, serving both as a receptor for the preprotein-SecB complex and as an ATP-driven molecular motor driving the stepwise translocation of polypeptide chains across the membrane. In Buchnera aphidicola subsp. Acyrthosiphon pisum (strain APS) (Acyrthosiphon pisum symbiotic bacterium), this protein is Protein translocase subunit SecA.